Here is a 32-residue protein sequence, read N- to C-terminus: Peptide II.10.10 (32 aa).

Cystine bridges form between cysteine 5–cysteine 24, cysteine 10–cysteine 29, and cysteine 14–cysteine 31.

This sequence belongs to the short scorpion toxin superfamily. Potassium channel inhibitor family. Alpha-KTx 10 subfamily. As to expression, expressed by the venom gland.

It is found in the secreted. The polypeptide is Peptide II.10.10 (Centruroides tecomanus (Scorpion)).